Reading from the N-terminus, the 233-residue chain is Large ribosomal subunit protein uL1 (233 aa).

Belongs to the universal ribosomal protein uL1 family. Part of the 50S ribosomal subunit.

In terms of biological role, binds directly to 23S rRNA. The L1 stalk is quite mobile in the ribosome, and is involved in E site tRNA release. Its function is as follows. Protein L1 is also a translational repressor protein, it controls the translation of the L11 operon by binding to its mRNA. The chain is Large ribosomal subunit protein uL1 from Brucella canis (strain ATCC 23365 / NCTC 10854 / RM-666).